The sequence spans 334 residues: Dihydroorotate dehydrogenase (quinone) (334 aa).

Residues 59–63 (AGLDK) and Thr-83 contribute to the FMN site. Lys-63 is a binding site for substrate. 108-112 (NRMGF) contacts substrate. 2 residues coordinate FMN: Asn-136 and Asn-169. Asn-169 lines the substrate pocket. The active-site Nucleophile is the Ser-172. Asn-174 is a binding site for substrate. The FMN site is built by Lys-214 and Thr-242. 243-244 (NT) contacts substrate. FMN-binding positions include Gly-265, Gly-294, and 315–316 (YS).

This sequence belongs to the dihydroorotate dehydrogenase family. Type 2 subfamily. In terms of assembly, monomer. Requires FMN as cofactor.

Its subcellular location is the cell membrane. It catalyses the reaction (S)-dihydroorotate + a quinone = orotate + a quinol. The protein operates within pyrimidine metabolism; UMP biosynthesis via de novo pathway; orotate from (S)-dihydroorotate (quinone route): step 1/1. In terms of biological role, catalyzes the conversion of dihydroorotate to orotate with quinone as electron acceptor. The sequence is that of Dihydroorotate dehydrogenase (quinone) from Acinetobacter baylyi (strain ATCC 33305 / BD413 / ADP1).